The sequence spans 194 residues: Translation machinery-associated protein 22 (194 aa).

The region spanning 102–173 (VQIKRVERNK…DVQDWLLEVY (72 aa)) is the SUI1 domain.

This sequence belongs to the DENR family. In terms of assembly, interacts with the 40S ribosomal subunit.

The protein localises to the cytoplasm. This is Translation machinery-associated protein 22 (tma22) from Aspergillus oryzae (strain ATCC 42149 / RIB 40) (Yellow koji mold).